Here is a 173-residue protein sequence, read N- to C-terminus: Protein-export protein SecB (173 aa).

The tract at residues 148–173 is disordered; that stretch reads QQQKQRREQGTSDSAPSGSPDNGGRQ. The segment covering 158 to 167 has biased composition (polar residues); sequence TSDSAPSGSP.

Belongs to the SecB family. Homotetramer, a dimer of dimers. One homotetramer interacts with 1 SecA dimer.

The protein localises to the cytoplasm. One of the proteins required for the normal export of preproteins out of the cell cytoplasm. It is a molecular chaperone that binds to a subset of precursor proteins, maintaining them in a translocation-competent state. It also specifically binds to its receptor SecA. This chain is Protein-export protein SecB, found in Halorhodospira halophila (strain DSM 244 / SL1) (Ectothiorhodospira halophila (strain DSM 244 / SL1)).